Reading from the N-terminus, the 132-residue chain is Small ribosomal subunit protein uS8 (132 aa).

It belongs to the universal ribosomal protein uS8 family. Part of the 30S ribosomal subunit. Contacts proteins S5 and S12.

One of the primary rRNA binding proteins, it binds directly to 16S rRNA central domain where it helps coordinate assembly of the platform of the 30S subunit. The protein is Small ribosomal subunit protein uS8 of Aliarcobacter butzleri (strain RM4018) (Arcobacter butzleri).